We begin with the raw amino-acid sequence, 127 residues long: uncharacterized protein (127 aa).

A helical membrane pass occupies residues 91–113 (IYLIVSIAVSILAIIAFFIFLML).

The protein localises to the membrane. This is an uncharacterized protein from Bacillus subtilis (strain 168).